A 486-amino-acid polypeptide reads, in one-letter code: Methionine aminopeptidase 2-2 (486 aa).

A compositionally biased stretch (basic and acidic residues) spans 1–10; the sequence is MGSKSPEGHR. Positions 1-120 are disordered; sequence MGSKSPEGHR…ALPATELKQT (120 aa). Acidic residues predominate over residues 46-56; that stretch reads GDDDDDEDAEE. The span at 93–108 shows a compositional bias: basic residues; sequence KKKKRKKSNKKKKKTK. Residue His238 participates in substrate binding. The a divalent metal cation site is built by Asp259, Asp270, and His339. His347 provides a ligand contact to substrate. A divalent metal cation-binding residues include Glu372 and Glu467.

The protein belongs to the peptidase M24A family. Methionine aminopeptidase eukaryotic type 2 subfamily. Co(2+) is required as a cofactor. Zn(2+) serves as cofactor. The cofactor is Mn(2+). Requires Fe(2+) as cofactor.

It is found in the cytoplasm. The enzyme catalyses Release of N-terminal amino acids, preferentially methionine, from peptides and arylamides.. In terms of biological role, cotranslationally removes the N-terminal methionine from nascent proteins. The N-terminal methionine is often cleaved when the second residue in the primary sequence is small and uncharged (Met-Ala-, Cys, Gly, Pro, Ser, Thr, or Val). This chain is Methionine aminopeptidase 2-2, found in Aspergillus fumigatus (strain ATCC MYA-4609 / CBS 101355 / FGSC A1100 / Af293) (Neosartorya fumigata).